Reading from the N-terminus, the 433-residue chain is GTPase Der (433 aa).

EngA-type G domains are found at residues 3 to 167 (NRVV…KEEK) and 175 to 347 (IKVA…KDYT). GTP-binding positions include 9–16 (GRPNVGKS), 56–60 (DTGGL), 119–122 (NKID), 181–188 (GRPNVGKS), 228–232 (DTAGV), and 293–296 (NKMD). The KH-like domain maps to 348–432 (KQHKTSFVNR…PIKLVIKGRE (85 aa)).

It belongs to the TRAFAC class TrmE-Era-EngA-EngB-Septin-like GTPase superfamily. EngA (Der) GTPase family. Associates with the 50S ribosomal subunit.

Functionally, GTPase that plays an essential role in the late steps of ribosome biogenesis. The protein is GTPase Der of Aquifex aeolicus (strain VF5).